The sequence spans 84 residues: MSGGSTGERPFSDIITSIRYWIIHSITIPALFVAGWLFVSTGLAYDIFGTPRPNEYFTQERQQVPLVNDRFSAKQELEDLTKGL.

Residues 22–36 form a helical membrane-spanning segment; it reads IIHSITIPALFVAGW. Histidine 24 lines the heme pocket.

The protein belongs to the PsbE/PsbF family. As to quaternary structure, heterodimer of an alpha subunit and a beta subunit. PSII is composed of 1 copy each of membrane proteins PsbA, PsbB, PsbC, PsbD, PsbE, PsbF, PsbH, PsbI, PsbJ, PsbK, PsbL, PsbM, PsbT, PsbX, PsbY, PsbZ, Psb30/Ycf12, at least 3 peripheral proteins of the oxygen-evolving complex and a large number of cofactors. It forms dimeric complexes. Requires heme b as cofactor.

The protein localises to the plastid. It localises to the chloroplast thylakoid membrane. Its function is as follows. This b-type cytochrome is tightly associated with the reaction center of photosystem II (PSII). PSII is a light-driven water:plastoquinone oxidoreductase that uses light energy to abstract electrons from H(2)O, generating O(2) and a proton gradient subsequently used for ATP formation. It consists of a core antenna complex that captures photons, and an electron transfer chain that converts photonic excitation into a charge separation. The protein is Cytochrome b559 subunit alpha of Guillardia theta (Cryptophyte).